The primary structure comprises 137 residues: Large ribosomal subunit protein uL16 (137 aa).

This sequence belongs to the universal ribosomal protein uL16 family. Part of the 50S ribosomal subunit.

In terms of biological role, binds 23S rRNA and is also seen to make contacts with the A and possibly P site tRNAs. This chain is Large ribosomal subunit protein uL16, found in Streptococcus thermophilus (strain CNRZ 1066).